We begin with the raw amino-acid sequence, 465 residues long: Glutathione reductase (465 aa).

FAD-binding residues include S16 and G17. Glutathione is bound at residue S16. R23 is a glutathione binding site. Residues E42, T49, C50, and K58 each contribute to the FAD site. C50 and C55 are oxidised to a cystine. Position 108 (Y108) interacts with glutathione. Residue G124 coordinates FAD. Positions 187, 190, 193, 210, 216, and 276 each coordinate NADP(+). D318 is an FAD binding site. L324 contributes to the NADP(+) binding site. FAD is bound at residue T326. Residue R334 coordinates glutathione. Residue V357 participates in NADP(+) binding. H454 lines the FAD pocket. H454 (proton acceptor) is an active-site residue.

Belongs to the class-I pyridine nucleotide-disulfide oxidoreductase family. FAD serves as cofactor.

The protein localises to the cytoplasm. The catalysed reaction is 2 glutathione + NADP(+) = glutathione disulfide + NADPH + H(+). Its function is as follows. Catalyzes the reduction of glutathione disulfide (GSSG) to reduced glutathione (GSH). Constitutes the major mechanism to maintain a high GSH:GSSG ratio in the cytosol. The amount of GSH may affect the determination of cell fate. The chain is Glutathione reductase (gsr) from Dictyostelium discoideum (Social amoeba).